We begin with the raw amino-acid sequence, 182 residues long: MIFDEFSIKTLIRPVPDFPRPGVIFRDITPLFQSPKALRMVADSFIQRYVEADFTHIGALDARGFLVGSILAYELNKPLVLFRKQGKLPADVLSQAYCTEYGEAHLEIHADSLCEGDSVLLFDDLIATGGTLLAAAQLVRRMRASIHEAAAIIDLPELGGSQKLQDIGIPTFTLTAFELSDR.

It belongs to the purine/pyrimidine phosphoribosyltransferase family. As to quaternary structure, homodimer.

It localises to the cytoplasm. The enzyme catalyses AMP + diphosphate = 5-phospho-alpha-D-ribose 1-diphosphate + adenine. It participates in purine metabolism; AMP biosynthesis via salvage pathway; AMP from adenine: step 1/1. Its function is as follows. Catalyzes a salvage reaction resulting in the formation of AMP, that is energically less costly than de novo synthesis. In Stutzerimonas stutzeri (strain A1501) (Pseudomonas stutzeri), this protein is Adenine phosphoribosyltransferase.